We begin with the raw amino-acid sequence, 484 residues long: tRNA sulfurtransferase (484 aa).

The THUMP domain maps to 63-167 (QGIRERLSCM…DQRLFVVHDQ (105 aa)). ATP is bound by residues 185 to 186 (LM), lysine 267, glycine 289, and glutamine 298. A disulfide bond links cysteine 346 and cysteine 457. Positions 405–483 (ALAGQVILDI…GHANVRVYRP (79 aa)) constitute a Rhodanese domain. Cysteine 457 serves as the catalytic Cysteine persulfide intermediate.

It belongs to the ThiI family.

The protein resides in the cytoplasm. The enzyme catalyses [ThiI sulfur-carrier protein]-S-sulfanyl-L-cysteine + a uridine in tRNA + 2 reduced [2Fe-2S]-[ferredoxin] + ATP + H(+) = [ThiI sulfur-carrier protein]-L-cysteine + a 4-thiouridine in tRNA + 2 oxidized [2Fe-2S]-[ferredoxin] + AMP + diphosphate. The catalysed reaction is [ThiS sulfur-carrier protein]-C-terminal Gly-Gly-AMP + S-sulfanyl-L-cysteinyl-[cysteine desulfurase] + AH2 = [ThiS sulfur-carrier protein]-C-terminal-Gly-aminoethanethioate + L-cysteinyl-[cysteine desulfurase] + A + AMP + 2 H(+). The protein operates within cofactor biosynthesis; thiamine diphosphate biosynthesis. In terms of biological role, catalyzes the ATP-dependent transfer of a sulfur to tRNA to produce 4-thiouridine in position 8 of tRNAs, which functions as a near-UV photosensor. Also catalyzes the transfer of sulfur to the sulfur carrier protein ThiS, forming ThiS-thiocarboxylate. This is a step in the synthesis of thiazole, in the thiamine biosynthesis pathway. The sulfur is donated as persulfide by IscS. The sequence is that of tRNA sulfurtransferase from Pseudomonas syringae pv. syringae (strain B728a).